We begin with the raw amino-acid sequence, 307 residues long: GTPase Era (307 aa).

An Era-type G domain is found at 17-186 (RCGFVAIVGR…LELIKPYLPE (170 aa)). Residues 25-32 (GRPNVGKS) are G1. Residue 25 to 32 (GRPNVGKS) coordinates GTP. The tract at residues 51-55 (QTTRN) is G2. Residues 72 to 75 (DTPG) are G3. GTP is bound by residues 72–76 (DTPGF) and 133–136 (NKID). The interval 133 to 136 (NKID) is G4. The interval 165 to 167 (VSA) is G5. The region spanning 217–293 (LGEELPYAMN…FLKVWVKVKS (77 aa)) is the KH type-2 domain.

Belongs to the TRAFAC class TrmE-Era-EngA-EngB-Septin-like GTPase superfamily. Era GTPase family. As to quaternary structure, monomer.

It localises to the cytoplasm. Its subcellular location is the cell inner membrane. An essential GTPase that binds both GDP and GTP, with rapid nucleotide exchange. Plays a role in 16S rRNA processing and 30S ribosomal subunit biogenesis and possibly also in cell cycle regulation and energy metabolism. The polypeptide is GTPase Era (Neisseria meningitidis serogroup A / serotype 4A (strain DSM 15465 / Z2491)).